A 164-amino-acid chain; its full sequence is Transcriptional regulator MraZ (164 aa).

SpoVT-AbrB domains lie at 7 to 60 and 83 to 126; these read HYTN…EIDG and SEIL…EPGR. A disordered region spans residues 144–164; it reads QLSARHAAPDAPPLRSHGARE.

The protein belongs to the MraZ family. In terms of assembly, forms oligomers.

The protein localises to the cytoplasm. The protein resides in the nucleoid. This is Transcriptional regulator MraZ from Methylocella silvestris (strain DSM 15510 / CIP 108128 / LMG 27833 / NCIMB 13906 / BL2).